The sequence spans 376 residues: Chaperone protein DnaJ (376 aa).

The J domain occupies 5–70 (DYYEVLGVAK…QKRAAYDQYG (66 aa)). The CR-type zinc finger occupies 136–214 (GYDTQIRVPS…CHGSGKVKET (79 aa)). Residues cysteine 149, cysteine 152, cysteine 166, cysteine 169, cysteine 188, cysteine 191, cysteine 202, and cysteine 205 each contribute to the Zn(2+) site. CXXCXGXG motif repeat units follow at residues 149–156 (CEVCHGSG), 166–173 (CPTCHGQG), 188–195 (CPKCHGTG), and 202–209 (CAHCHGSG).

It belongs to the DnaJ family. As to quaternary structure, homodimer. Requires Zn(2+) as cofactor.

It is found in the cytoplasm. Functionally, participates actively in the response to hyperosmotic and heat shock by preventing the aggregation of stress-denatured proteins and by disaggregating proteins, also in an autonomous, DnaK-independent fashion. Unfolded proteins bind initially to DnaJ; upon interaction with the DnaJ-bound protein, DnaK hydrolyzes its bound ATP, resulting in the formation of a stable complex. GrpE releases ADP from DnaK; ATP binding to DnaK triggers the release of the substrate protein, thus completing the reaction cycle. Several rounds of ATP-dependent interactions between DnaJ, DnaK and GrpE are required for fully efficient folding. Also involved, together with DnaK and GrpE, in the DNA replication of plasmids through activation of initiation proteins. This is Chaperone protein DnaJ from Burkholderia multivorans (strain ATCC 17616 / 249).